An 879-amino-acid chain; its full sequence is Alanine--tRNA ligase (879 aa).

Positions 566, 570, 668, and 672 each coordinate Zn(2+).

Belongs to the class-II aminoacyl-tRNA synthetase family. It depends on Zn(2+) as a cofactor.

It localises to the cytoplasm. It catalyses the reaction tRNA(Ala) + L-alanine + ATP = L-alanyl-tRNA(Ala) + AMP + diphosphate. Its function is as follows. Catalyzes the attachment of alanine to tRNA(Ala) in a two-step reaction: alanine is first activated by ATP to form Ala-AMP and then transferred to the acceptor end of tRNA(Ala). Also edits incorrectly charged Ser-tRNA(Ala) and Gly-tRNA(Ala) via its editing domain. In Clostridium novyi (strain NT), this protein is Alanine--tRNA ligase.